A 99-amino-acid polypeptide reads, in one-letter code: Sperm protein associated with the nucleus on the X chromosome N4 (99 aa).

The span at 1-10 (MEEPTSSTNE) shows a compositional bias: polar residues. Residues 1 to 99 (MEEPTSSTNE…AGSPQDGGQN (99 aa)) form a disordered region. Positions 11–22 (NKMKSPCESNKR) are enriched in basic and acidic residues. A compositionally biased stretch (basic residues) spans 23–32 (KVDKKKKNLH). The span at 64-78 (SNQLENNQPTESSTD) shows a compositional bias: polar residues.

It belongs to the SPAN-X family.

The protein is Sperm protein associated with the nucleus on the X chromosome N4 (SPANXN4) of Homo sapiens (Human).